A 274-amino-acid polypeptide reads, in one-letter code: Undecaprenyl-diphosphatase 1 (274 aa).

Transmembrane regions (helical) follow at residues 8–28 (WLLIKYLLLGLFQGFTEPIPV), 45–65 (IEGLSFEVMVNFASLFAVIAI), 92–112 (FRISFYLLLATVPAVLAALLF), 120–140 (LKQLHVIAFALLITGMALWLI), 195–215 (FSFFLYIPISLGSGVLAISDI), 230–250 (IAFIGSFIASYVSLLWFMNIM), and 253–273 (GKLIYFALYCWLAGLIVLSLL).

Belongs to the UppP family.

Its subcellular location is the cell membrane. The enzyme catalyses di-trans,octa-cis-undecaprenyl diphosphate + H2O = di-trans,octa-cis-undecaprenyl phosphate + phosphate + H(+). In terms of biological role, catalyzes the dephosphorylation of undecaprenyl diphosphate (UPP). Confers resistance to bacitracin. The polypeptide is Undecaprenyl-diphosphatase 1 (Halalkalibacterium halodurans (strain ATCC BAA-125 / DSM 18197 / FERM 7344 / JCM 9153 / C-125) (Bacillus halodurans)).